We begin with the raw amino-acid sequence, 596 residues long: MKHIRNFSIIAHIDHGKSTLSDRLIQVCGGLTDREMAEQVLDSMDLERERGITIKAQSVTLDYTAKNGETYQLNFIDTPGHVDFSYEVSRSLAACEGALLVVDAGQGVEAQTLANCYTALEMDLEVVPVLNKIDLPQAEPERVAAEIEDIVGIEATDAVRCSAKTGVGIGEVLETIVAQIPSPEGDPEAPLQALIIDSWFDSYLGVVSLVRIKNGVLKKGDKFKVMSTGQAYNADRVGIFTPKMKDQAELKTGQVGYVIAGIKEIHGAPVGDTLTLAKHGADKPLPGFKKAKPQVYAGVFTISTDDYESFRDALNKLSLNDASLQFEPETSSALGFGFRIGYLGLLHMEIIQERLEREYDLDLITTAPTVEYEVLLTNGETLYVDNPSDLPATNYIEEMREPIVQANILVPKEYLGNVITLCIEKRGVQKNMVYHGNQVALTYDIPAAEVVMDFFDRLKSTSRGYASLEYNFIRFEPADMVRLDVLINGDRVDALAMIIHRSNIRHKGIALVDKMKELIPRQMFDIAIQAAVGNQVVARSTVKALRKDVTAKCYGGDVSRKKKLLQKQKEGKKRMKQLGNVEVPQEAFLAVLKLNE.

Positions K2–E184 constitute a tr-type G domain. GTP is bound by residues D14–T19 and N131–D134.

It belongs to the TRAFAC class translation factor GTPase superfamily. Classic translation factor GTPase family. LepA subfamily.

The protein localises to the cell inner membrane. It carries out the reaction GTP + H2O = GDP + phosphate + H(+). Functionally, required for accurate and efficient protein synthesis under certain stress conditions. May act as a fidelity factor of the translation reaction, by catalyzing a one-codon backward translocation of tRNAs on improperly translocated ribosomes. Back-translocation proceeds from a post-translocation (POST) complex to a pre-translocation (PRE) complex, thus giving elongation factor G a second chance to translocate the tRNAs correctly. Binds to ribosomes in a GTP-dependent manner. In Shewanella amazonensis (strain ATCC BAA-1098 / SB2B), this protein is Elongation factor 4.